Here is a 114-residue protein sequence, read N- to C-terminus: Gas vesicle protein J (114 aa).

The segment at 63–114 is disordered; the sequence is PTGTDMERVEEAAGISPDESRSLDTRSESEQMDELPGEAGASVSNTAPQEEE. The span at 80-91 shows a compositional bias: basic and acidic residues; that stretch reads DESRSLDTRSES. The span at 104–114 shows a compositional bias: polar residues; it reads SVSNTAPQEEE.

This sequence belongs to the gas vesicle GvpA family. In terms of assembly, gvpF to GvpM interact with each other in vitro, and may form multi-subunit complex(es). Interacts with GvpA.

It is found in the gas vesicle. A minor component of the gas vesicle, proteins GvpF to GvpM might be involved in nucleating gas vesicle formation. Gas vesicles are hollow, gas filled proteinaceous nanostructures found in some microorganisms. They allow positioning of halobacteria at the optimal depth for growth in the poorly aerated, shallow brine pools of their habitat. Its function is as follows. Expression of a 9.5 kb mc-vac DNA fragment containing 2 divergently transcribed regions (gvpD-gvpE-gvpF-gvpG-gvpH-gvpI-gvpJ-gvpK-gvpL-gvpM and gvpA-gvpC-gvpN-gvpO) allows H.volcanii to produce gas vesicles. This Haloferax mediterranei (strain ATCC 33500 / DSM 1411 / JCM 8866 / NBRC 14739 / NCIMB 2177 / R-4) (Halobacterium mediterranei) protein is Gas vesicle protein J.